Reading from the N-terminus, the 87-residue chain is Large ribosomal subunit protein bL31B (87 aa).

The protein belongs to the bacterial ribosomal protein bL31 family. Type B subfamily. As to quaternary structure, part of the 50S ribosomal subunit.

This is Large ribosomal subunit protein bL31B from Corynebacterium kroppenstedtii (strain DSM 44385 / JCM 11950 / CIP 105744 / CCUG 35717).